We begin with the raw amino-acid sequence, 407 residues long: D-inositol 3-phosphate glycosyltransferase (407 aa).

A 1D-myo-inositol 3-phosphate-binding site is contributed by histidine 2. UDP-N-acetyl-alpha-D-glucosamine is bound by residues 8–9 and glycine 16; that span reads QP. 1D-myo-inositol 3-phosphate contacts are provided by residues 13–18, arginine 71, tyrosine 104, threonine 128, and arginine 148; that span reads DAGGLN. UDP-N-acetyl-alpha-D-glucosamine is bound by residues arginine 222 and lysine 227. Mg(2+) contacts are provided by tyrosine 297, arginine 298, and alanine 300. Residues glutamate 310 and glutamate 318 each contribute to the UDP-N-acetyl-alpha-D-glucosamine site. Position 324 (threonine 324) interacts with Mg(2+).

It belongs to the glycosyltransferase group 1 family. MshA subfamily. Homodimer.

It carries out the reaction 1D-myo-inositol 3-phosphate + UDP-N-acetyl-alpha-D-glucosamine = 1D-myo-inositol 2-acetamido-2-deoxy-alpha-D-glucopyranoside 3-phosphate + UDP + H(+). Catalyzes the transfer of a N-acetyl-glucosamine moiety to 1D-myo-inositol 3-phosphate to produce 1D-myo-inositol 2-acetamido-2-deoxy-glucopyranoside 3-phosphate in the mycothiol biosynthesis pathway. This chain is D-inositol 3-phosphate glycosyltransferase, found in Frankia alni (strain DSM 45986 / CECT 9034 / ACN14a).